Reading from the N-terminus, the 352-residue chain is UDP-N-acetylglucosamine--N-acetylmuramyl-(pentapeptide) pyrophosphoryl-undecaprenol N-acetylglucosamine transferase (352 aa).

UDP-N-acetyl-alpha-D-glucosamine-binding positions include 11–13, asparagine 120, arginine 161, serine 188, and glutamine 286; that span reads TGG.

It belongs to the glycosyltransferase 28 family. MurG subfamily.

Its subcellular location is the cell inner membrane. The catalysed reaction is di-trans,octa-cis-undecaprenyl diphospho-N-acetyl-alpha-D-muramoyl-L-alanyl-D-glutamyl-meso-2,6-diaminopimeloyl-D-alanyl-D-alanine + UDP-N-acetyl-alpha-D-glucosamine = di-trans,octa-cis-undecaprenyl diphospho-[N-acetyl-alpha-D-glucosaminyl-(1-&gt;4)]-N-acetyl-alpha-D-muramoyl-L-alanyl-D-glutamyl-meso-2,6-diaminopimeloyl-D-alanyl-D-alanine + UDP + H(+). It functions in the pathway cell wall biogenesis; peptidoglycan biosynthesis. In terms of biological role, cell wall formation. Catalyzes the transfer of a GlcNAc subunit on undecaprenyl-pyrophosphoryl-MurNAc-pentapeptide (lipid intermediate I) to form undecaprenyl-pyrophosphoryl-MurNAc-(pentapeptide)GlcNAc (lipid intermediate II). In Prochlorococcus marinus (strain NATL2A), this protein is UDP-N-acetylglucosamine--N-acetylmuramyl-(pentapeptide) pyrophosphoryl-undecaprenol N-acetylglucosamine transferase.